We begin with the raw amino-acid sequence, 57 residues long: Small ribosomal subunit protein eS27 (57 aa).

The Zn(2+) site is built by C10, C13, C29, and C32. The segment at 10 to 32 (CDDCENEQVLFGKAANTVNCAVC) adopts a C4-type zinc-finger fold.

The protein belongs to the eukaryotic ribosomal protein eS27 family. Part of the 30S ribosomal subunit. Requires Zn(2+) as cofactor.

In Natronomonas pharaonis (strain ATCC 35678 / DSM 2160 / CIP 103997 / JCM 8858 / NBRC 14720 / NCIMB 2260 / Gabara) (Halobacterium pharaonis), this protein is Small ribosomal subunit protein eS27.